A 182-amino-acid polypeptide reads, in one-letter code: Early upstream open reading frame (182 aa).

The protein belongs to the EUO family.

The chain is Early upstream open reading frame from Chlamydophila psittaci (strain ATCC VR-125 / 6BC) (Chlamydia psittaci).